A 600-amino-acid polypeptide reads, in one-letter code: MNLKPPTSKVELRIKCHKILDKDTLSKSDPRASVYEKDRAGQFRLIGKTETIQNQLNPEFKTPIVIDYRFEEIQVLKFEIHDVDKNDEDFIGDASCTLTSILSKPGQTVCLQLLTKSGKHAGSMTVIAEEIKNTLQTIKFNLIGKKFDKKDLFGAGCDPYLIISRKVPSTNTFVKIYESQVQKGTLNPVFSGIEMKLEELCGGDMQREIKFEFYDWDRIGKHDYIGEFHTNAQELLQPNQAFNVINSHKQEKKSGYKNSGTVSVSDAVIEREYNFLEYIMGGCQMNLIVGIDCTASNGDSNDPNSLHYKNAQGLNQYANAICSVGNVIVPYTTTPLIPVYGFGGIMPGQSEVSHCFPMTLNASNTLCCGVNGVLDCYYDNISKIQLHGPTYFAPLINMAARYASQGQSQSNQKYTILMIITDGEILDADNTIDAIVKSSGLPLSIIIVGVGNANFTNMNILDGDDAALQSGGVRAERDIVQFVAMRDYLNRPNELAAEVLREIPTQFLSFMKKYKFRPNPPPPPPPVIIGAPPQYDNPTTTTTATSPSTGIDLNKGSNVGLNLTKTESSPSPSGGAGIDLNKGSVVDITKGVSNVSLEKN.

C2 domains lie at 1 to 111 (MNLK…TVCL) and 116 to 246 (KSGK…NVIN). Ca(2+) is bound by residues Asp23, Asp29, Asp82, Asp84, Asp89, Asp151, Asp158, Asp215, Asp217, and Asp223. One can recognise a VWFA domain in the interval 286–503 (NLIVGIDCTA…ELAAEVLREI (218 aa)). Residues 535-549 (YDNPTTTTTATSPST) are compositionally biased toward low complexity. Residues 535 to 583 (YDNPTTTTTATSPSTGIDLNKGSNVGLNLTKTESSPSPSGGAGIDLNKG) are disordered. The segment covering 555–572 (KGSNVGLNLTKTESSPSP) has biased composition (polar residues).

It belongs to the copine family. Requires Ca(2+) as cofactor.

It is found in the cytoplasm. Its subcellular location is the membrane. In terms of biological role, required for cytokinesis, contractile vacuole function and development. The chain is Copine-A (cpnA) from Dictyostelium discoideum (Social amoeba).